A 151-amino-acid chain; its full sequence is Large ribosomal subunit protein bL9 (151 aa).

The protein belongs to the bacterial ribosomal protein bL9 family.

In terms of biological role, binds to the 23S rRNA. This is Large ribosomal subunit protein bL9 from Chlorobium phaeobacteroides (strain DSM 266 / SMG 266 / 2430).